The following is a 248-amino-acid chain: Adenosylcobinamide-GDP ribazoletransferase (248 aa).

Transmembrane regions (helical) follow at residues 36-56 (FFLP…YLGL), 59-79 (FLPA…ITGG), 114-134 (GTIA…SLVL), 137-157 (YSIA…FLCL), 170-190 (IFIG…VLVL), and 199-219 (ATII…LLCL).

The protein belongs to the CobS family. The cofactor is Mg(2+).

It localises to the cell membrane. The catalysed reaction is alpha-ribazole + adenosylcob(III)inamide-GDP = adenosylcob(III)alamin + GMP + H(+). It carries out the reaction alpha-ribazole 5'-phosphate + adenosylcob(III)inamide-GDP = adenosylcob(III)alamin 5'-phosphate + GMP + H(+). It functions in the pathway cofactor biosynthesis; adenosylcobalamin biosynthesis; adenosylcobalamin from cob(II)yrinate a,c-diamide: step 7/7. In terms of biological role, joins adenosylcobinamide-GDP and alpha-ribazole to generate adenosylcobalamin (Ado-cobalamin). Also synthesizes adenosylcobalamin 5'-phosphate from adenosylcobinamide-GDP and alpha-ribazole 5'-phosphate. This chain is Adenosylcobinamide-GDP ribazoletransferase, found in Clostridium botulinum (strain Langeland / NCTC 10281 / Type F).